Reading from the N-terminus, the 81-residue chain is Penaeidin-3j (81 aa).

The first 19 residues, 1–19 (MRLVVCLVFLASFALVCQG), serve as a signal peptide directing secretion. Residue Gln20 is modified to Pyrrolidone carboxylic acid. Disulfide bonds link Cys50/Cys65, Cys54/Cys72, and Cys66/Cys73. Serine amide is present on Ser80.

Belongs to the penaeidin family.

It localises to the cytoplasmic granule. Its function is as follows. Antibacterial and antifungal activity. Presents chitin-binding activity. This chain is Penaeidin-3j, found in Penaeus vannamei (Whiteleg shrimp).